The chain runs to 289 residues: Acetylglutamate kinase (289 aa).

Substrate contacts are provided by residues 60–61 (GG), Arg-82, and Asn-182.

This sequence belongs to the acetylglutamate kinase family. ArgB subfamily.

It is found in the cytoplasm. The enzyme catalyses N-acetyl-L-glutamate + ATP = N-acetyl-L-glutamyl 5-phosphate + ADP. It participates in amino-acid biosynthesis; L-arginine biosynthesis; N(2)-acetyl-L-ornithine from L-glutamate: step 2/4. In terms of biological role, catalyzes the ATP-dependent phosphorylation of N-acetyl-L-glutamate. In Methanothrix thermoacetophila (strain DSM 6194 / JCM 14653 / NBRC 101360 / PT) (Methanosaeta thermophila), this protein is Acetylglutamate kinase.